Consider the following 202-residue polypeptide: Transmembrane 4 L6 family member 4 (202 aa).

The Cytoplasmic segment spans residues 1–9; that stretch reads MCTGGCARC. Residues 10–30 form a helical membrane-spanning segment; sequence LGGTLIPLAVFGLLANILLFF. Residues 31-48 are Extracellular-facing; that stretch reads PGGKVVNDKSHLSDEVWY. A helical membrane pass occupies residues 49-69; that stretch reads FGGILGSGVLMIFPALVFLGL. Over 70 to 93 the chain is Cytoplasmic; the sequence is QNNDCCGCCGNEGCGKRFAMFTST. A helical membrane pass occupies residues 94–114; the sequence is LFAVIGFLGAGYSFIVSAVSI. The Extracellular portion of the chain corresponds to 115-158; sequence NKGPKCFMANGTWGYPFHDGDYLKDQALWSECEEPRDVVPWNLT. A glycan (N-linked (GlcNAc...) asparagine) is linked at Asn156. The chain crosses the membrane as a helical span at residues 159-179; the sequence is LFSILLVIGGIQMVLCAIQVI. Residues 180 to 202 are Cytoplasmic-facing; that stretch reads NGLLGTLCGDCQCCGCCGGDGPV.

This sequence belongs to the L6 tetraspanin family.

It is found in the membrane. In terms of biological role, regulates the adhesive and proliferative status of intestinal epithelial cells. Can mediate density-dependent cell proliferation. In Mus musculus (Mouse), this protein is Transmembrane 4 L6 family member 4 (Tm4sf4).